Here is a 124-residue protein sequence, read N- to C-terminus: UPF0102 protein tll1737 (124 aa).

This sequence belongs to the UPF0102 family.

The chain is UPF0102 protein tll1737 from Thermosynechococcus vestitus (strain NIES-2133 / IAM M-273 / BP-1).